The following is a 602-amino-acid chain: MDDHKTASPPRERSYETPPAERPITDAEAARAAALSANEHIKIASGYLRGTLADGLLKHATGAISDDDGQLVKFHGMYLQDDRDLRAERTKKKLEKAYSFMIRLRIAGGVVSPKQWLALDEIARTYANGTLRATTRQTFQYHGVIKSNLKRTMQAIDAVLLDTIAACGDVNRNVMAATNPAQTGAHKAAYQLAKTISDTLLPKTNAWREIWLDGERVVGGEDEAVEPIYGKTYLPRKFKIVVAVPPSNEVDIFAHDLGFIAILDKKNKLKGWNVTVGGGMGMTHGETDTFPRTADVMAFCEPEDALKVAEAVMTVQRDWGNRKSRKNARLKYTIERYGLAAFRAEVERRVGRKLQDPKPFRFESNGDRYGWVEGEDGRHHLTLYLPSGRIKDVEGGPRYLSGLRRIAEVHQGDFRLTGNQNVIVANVPADRKSEIDALVAEYGLNLGVTALRRNSLACVALPTCGLALAESERFMPGLLTELEESLAAHGLQDEDITIRMTGCPNGCARPYIAEIGFVGRGPERYNLYLGAAFDGSRLSKLYAEDVAAKDIRATLDPLFAAYARDRQPGERFGDFVIRAGFVAKTINGPDFHDRTGALKAVA.

Positions Met-1–Tyr-15 are enriched in basic and acidic residues. Residues Met-1 to Ile-24 form a disordered region. [4Fe-4S] cluster contacts are provided by Cys-458, Cys-464, Cys-503, and Cys-507. Siroheme is bound at residue Cys-507.

This sequence belongs to the nitrite and sulfite reductase 4Fe-4S domain family. As to quaternary structure, alpha(8)-beta(8). The alpha component is a flavoprotein, the beta component is a hemoprotein. Siroheme serves as cofactor. It depends on [4Fe-4S] cluster as a cofactor.

The enzyme catalyses hydrogen sulfide + 3 NADP(+) + 3 H2O = sulfite + 3 NADPH + 4 H(+). Its pathway is sulfur metabolism; hydrogen sulfide biosynthesis; hydrogen sulfide from sulfite (NADPH route): step 1/1. Functionally, component of the sulfite reductase complex that catalyzes the 6-electron reduction of sulfite to sulfide. This is one of several activities required for the biosynthesis of L-cysteine from sulfate. In Methylobacterium nodulans (strain LMG 21967 / CNCM I-2342 / ORS 2060), this protein is Sulfite reductase [NADPH] hemoprotein beta-component.